The primary structure comprises 249 residues: Domoic acid biosynthesis cluster protein B (249 aa).

Unknown function: part of the gene cluster that mediates the biosynthesis of domoic acid (DA) and derivatives, natural products with neurochemical activity acting as ionotropic glutamate receptor (iGluR) agonists, thus being neurotoxins causing amnesic shellfish poisoning (ASP). This Pseudo-nitzschia multiseries (Marine planktonic diatom) protein is Domoic acid biosynthesis cluster protein B.